The primary structure comprises 89 residues: Elongation factor 1-beta (89 aa).

It belongs to the EF-1-beta/EF-1-delta family.

Promotes the exchange of GDP for GTP in EF-1-alpha/GDP, thus allowing the regeneration of EF-1-alpha/GTP that could then be used to form the ternary complex EF-1-alpha/GTP/AAtRNA. The chain is Elongation factor 1-beta (ef1b) from Methanothermobacter thermautotrophicus (strain ATCC 29096 / DSM 1053 / JCM 10044 / NBRC 100330 / Delta H) (Methanobacterium thermoautotrophicum).